The sequence spans 79 residues: Cytochrome b (79 aa).

The next 3 membrane-spanning stretches (helical) occupy residues 1-7 (SALFLAM), 31-52 (WLIRYMHANGSSLFFICLYLHI), and 67-79 (WNIGIILLFLTMA). H37 and H51 together coordinate heme b.

Belongs to the cytochrome b family. The cytochrome bc1 complex contains 11 subunits: 3 respiratory subunits (MT-CYB, CYC1 and UQCRFS1), 2 core proteins (UQCRC1 and UQCRC2) and 6 low-molecular weight proteins (UQCRH/QCR6, UQCRB/QCR7, UQCRQ/QCR8, UQCR10/QCR9, UQCR11/QCR10 and a cleavage product of UQCRFS1). This cytochrome bc1 complex then forms a dimer. The cofactor is heme b.

It is found in the mitochondrion inner membrane. Component of the ubiquinol-cytochrome c reductase complex (complex III or cytochrome b-c1 complex) that is part of the mitochondrial respiratory chain. The b-c1 complex mediates electron transfer from ubiquinol to cytochrome c. Contributes to the generation of a proton gradient across the mitochondrial membrane that is then used for ATP synthesis. This is Cytochrome b (MT-CYB) from Dipodomys californicus (California kangaroo rat).